The primary structure comprises 376 residues: Chaperone protein DnaJ (376 aa).

Positions 5-70 constitute a J domain; the sequence is DYYEVLGVAR…NKRRAYDAHG (66 aa). The CR-type zinc finger occupies 132–209; that stretch reads GIERRIEIPT…CHGAGRVEED (78 aa). The Zn(2+) site is built by C145, C148, C161, C164, C183, C186, C197, and C200. CXXCXGXG motif repeat units lie at residues 145-152, 161-168, 183-190, and 197-204; these read CEPCHGSG, CATCHGRG, CPHCDGRG, and CKTCHGAG.

The protein belongs to the DnaJ family. In terms of assembly, homodimer. Zn(2+) serves as cofactor.

Its subcellular location is the cytoplasm. In terms of biological role, participates actively in the response to hyperosmotic and heat shock by preventing the aggregation of stress-denatured proteins and by disaggregating proteins, also in an autonomous, DnaK-independent fashion. Unfolded proteins bind initially to DnaJ; upon interaction with the DnaJ-bound protein, DnaK hydrolyzes its bound ATP, resulting in the formation of a stable complex. GrpE releases ADP from DnaK; ATP binding to DnaK triggers the release of the substrate protein, thus completing the reaction cycle. Several rounds of ATP-dependent interactions between DnaJ, DnaK and GrpE are required for fully efficient folding. Also involved, together with DnaK and GrpE, in the DNA replication of plasmids through activation of initiation proteins. The protein is Chaperone protein DnaJ of Xanthomonas campestris pv. campestris (strain 8004).